Here is a 201-residue protein sequence, read N- to C-terminus: dITP/XTP pyrophosphatase (201 aa).

9–14 (TRNSGK) contacts substrate. 2 residues coordinate Mg(2+): E42 and D71. D71 functions as the Proton acceptor in the catalytic mechanism. Substrate is bound by residues S72, 156–159 (FGYD), K178, and 183–184 (HR).

This sequence belongs to the HAM1 NTPase family. As to quaternary structure, homodimer. Mg(2+) is required as a cofactor.

The enzyme catalyses XTP + H2O = XMP + diphosphate + H(+). It catalyses the reaction dITP + H2O = dIMP + diphosphate + H(+). It carries out the reaction ITP + H2O = IMP + diphosphate + H(+). In terms of biological role, pyrophosphatase that catalyzes the hydrolysis of nucleoside triphosphates to their monophosphate derivatives, with a high preference for the non-canonical purine nucleotides XTP (xanthosine triphosphate), dITP (deoxyinosine triphosphate) and ITP. Seems to function as a house-cleaning enzyme that removes non-canonical purine nucleotides from the nucleotide pool, thus preventing their incorporation into DNA/RNA and avoiding chromosomal lesions. The polypeptide is dITP/XTP pyrophosphatase (ynbD) (Lactococcus lactis subsp. lactis (strain IL1403) (Streptococcus lactis)).